The primary structure comprises 101 residues: Small ribosomal subunit protein uS14 (101 aa).

It belongs to the universal ribosomal protein uS14 family. As to quaternary structure, part of the 30S ribosomal subunit. Contacts proteins S3 and S10.

Its function is as follows. Binds 16S rRNA, required for the assembly of 30S particles and may also be responsible for determining the conformation of the 16S rRNA at the A site. The sequence is that of Small ribosomal subunit protein uS14 from Burkholderia lata (strain ATCC 17760 / DSM 23089 / LMG 22485 / NCIMB 9086 / R18194 / 383).